The following is a 565-amino-acid chain: Potassium-transporting ATPase potassium-binding subunit (565 aa).

A run of 12 helical transmembrane segments spans residues 6-26 (LMLL…LGSL), 63-83 (LLAI…LLMA), 132-152 (GLGV…FALI), 175-195 (LYVL…QGVI), 250-270 (LSNL…CFAF), 283-303 (LLWT…YAEL), 327-347 (FGIL…CGAV), 354-374 (FTAL…VVFG), 379-399 (GLYG…LMIG), 418-438 (ALAI…ALLC), 483-503 (LLLA…VMAI), and 524-544 (GALF…LTFI).

This sequence belongs to the KdpA family. As to quaternary structure, the system is composed of three essential subunits: KdpA, KdpB and KdpC.

The protein resides in the cell inner membrane. Its function is as follows. Part of the high-affinity ATP-driven potassium transport (or Kdp) system, which catalyzes the hydrolysis of ATP coupled with the electrogenic transport of potassium into the cytoplasm. This subunit binds the periplasmic potassium ions and delivers the ions to the membrane domain of KdpB through an intramembrane tunnel. This chain is Potassium-transporting ATPase potassium-binding subunit, found in Edwardsiella ictaluri (strain 93-146).